The primary structure comprises 353 residues: 3-isopropylmalate dehydrogenase (353 aa).

Positions 97, 107, 135, and 219 each coordinate substrate. 3 residues coordinate Mg(2+): Asp-219, Asp-243, and Asp-247.

This sequence belongs to the isocitrate and isopropylmalate dehydrogenases family. LeuB type 1 subfamily. In terms of assembly, homodimer. Requires Mg(2+) as cofactor. Mn(2+) serves as cofactor.

Its subcellular location is the cytoplasm. It carries out the reaction (2R,3S)-3-isopropylmalate + NAD(+) = 4-methyl-2-oxopentanoate + CO2 + NADH. The protein operates within amino-acid biosynthesis; L-leucine biosynthesis; L-leucine from 3-methyl-2-oxobutanoate: step 3/4. Functionally, catalyzes the oxidation of 3-carboxy-2-hydroxy-4-methylpentanoate (3-isopropylmalate) to 3-carboxy-4-methyl-2-oxopentanoate. The product decarboxylates to 4-methyl-2 oxopentanoate. The chain is 3-isopropylmalate dehydrogenase from Bacteroides fragilis (strain ATCC 25285 / DSM 2151 / CCUG 4856 / JCM 11019 / LMG 10263 / NCTC 9343 / Onslow / VPI 2553 / EN-2).